The sequence spans 72 residues: Translation initiation factor IF-1 (72 aa).

The S1-like domain occupies 1–72 (MSKEEAIEVE…SRGRITYRAK (72 aa)).

Belongs to the IF-1 family. Component of the 30S ribosomal translation pre-initiation complex which assembles on the 30S ribosome in the order IF-2 and IF-3, IF-1 and N-formylmethionyl-tRNA(fMet); mRNA recruitment can occur at any time during PIC assembly.

It is found in the cytoplasm. Its function is as follows. One of the essential components for the initiation of protein synthesis. Stabilizes the binding of IF-2 and IF-3 on the 30S subunit to which N-formylmethionyl-tRNA(fMet) subsequently binds. Helps modulate mRNA selection, yielding the 30S pre-initiation complex (PIC). Upon addition of the 50S ribosomal subunit IF-1, IF-2 and IF-3 are released leaving the mature 70S translation initiation complex. This Geobacter metallireducens (strain ATCC 53774 / DSM 7210 / GS-15) protein is Translation initiation factor IF-1.